The chain runs to 512 residues: N-fatty-acyl-amino acid synthase/hydrolase PM20D1 (512 aa).

The first 34 residues, 1–34 (MAVSRWKAVGSTLLAAFLVGLVVLIAVLLIRTYT), serve as a signal peptide directing secretion. Asn-45 and Asn-81 each carry an N-linked (GlcNAc...) asparagine glycan. His-134 contacts Zn(2+). Asp-136 is an active-site residue. A Zn(2+)-binding site is contributed by Asp-166. The active-site Proton acceptor is the Glu-200. Zn(2+) contacts are provided by Glu-201 and Asp-227. Asn-450 is a glycosylation site (N-linked (GlcNAc...) asparagine). Residue His-472 participates in Zn(2+) binding.

Belongs to the peptidase M20A family.

The protein localises to the secreted. The enzyme catalyses an N-acyl-L-amino acid + H2O = an L-alpha-amino acid + a carboxylate. The catalysed reaction is an N-acyl-aromatic L-alpha-amino acid + H2O = an aromatic L-alpha-amino acid + a carboxylate. It carries out the reaction N-(5Z,8Z,11Z,14Z)-eicosatetraenoyl-glycine + H2O = (5Z,8Z,11Z,14Z)-eicosatetraenoate + glycine. It catalyses the reaction N-hexadecanoyl-L-phenylalanine + H2O = hexadecanoate + L-phenylalanine. The enzyme catalyses N-octadecanoyl-L-phenylalanine + H2O = octadecanoate + L-phenylalanine. The catalysed reaction is N-(4Z,7Z,10Z,13Z,16Z,19Z-docosahexaenoyl)-L-phenylalanine + H2O = (4Z,7Z,10Z,13Z,16Z,19Z)-docosahexaenoate + L-phenylalanine. It carries out the reaction N-(9Z-octadecenoyl)-L-asparagine + H2O = L-asparagine + (9Z)-octadecenoate. It catalyses the reaction (9Z)-octadecenoate + glycine = N-(9Z-octadecenoyl)glycine + H2O. The enzyme catalyses N-(9Z-octadecenoyl)-L-lysine + H2O = L-lysine + (9Z)-octadecenoate. The catalysed reaction is N-(9Z-octadecenoyl)-L-methionine + H2O = (9Z)-octadecenoate + L-methionine. It carries out the reaction N-(9Z-octadecenoyl)-L-serine + H2O = L-serine + (9Z)-octadecenoate. It catalyses the reaction N-(9Z-octadecenoyl)-L-tryptophan + H2O = L-tryptophan + (9Z)-octadecenoate. The enzyme catalyses N-(9Z-octadecenoyl)-L-tyrosine + H2O = L-tyrosine + (9Z)-octadecenoate. The catalysed reaction is N-(9Z-octadecenoyl)-L-glutamine + H2O = L-glutamine + (9Z)-octadecenoate. It carries out the reaction N-(5Z,8Z,11Z,14Z-eicosatetraenoyl)-L-serine + H2O = (5Z,8Z,11Z,14Z)-eicosatetraenoate + L-serine. It catalyses the reaction (5Z,8Z,11Z,14Z)-eicosatetraenoate + L-phenylalanine = N-(5Z,8Z,11Z,14Z-eicosatetraenoyl)-L-phenylalanine + H2O. The enzyme catalyses N-(9Z-octadecenoyl)-L-leucine + H2O = L-leucine + (9Z)-octadecenoate. The catalysed reaction is L-phenylalanine + (9Z)-octadecenoate = N-(9Z-octadecenoyl)-L-phenylalanine + H2O. It participates in amino-acid metabolism. Its pathway is energy metabolism; electron transfer. The protein operates within lipid metabolism; fatty acid metabolism. Its activity is regulated as follows. Lipoproteins are powerful coactivators of PM20D1 activity in vitro and NAA biosynthesis in vivo. Secreted enzyme that regulates the endogenous N-fatty acyl amino acid (NAAs) tissue and circulating levels by functioning as a bidirectional NAA synthase/hydrolase. It condenses free fatty acids and free amino acids to generate NAAs and bidirectionally catalyzes the reverse hydrolysis reaction. Some of these NAAs stimulate oxidative metabolism via mitochondrial uncoupling, increasing energy expenditure in a UPC1-independent manner. Thereby, this secreted protein may indirectly regulate whole body energy expenditure. PM20D1 circulates in tight association with both low- and high-density (LDL and HDL,respectively) lipoprotein particles. The sequence is that of N-fatty-acyl-amino acid synthase/hydrolase PM20D1 from Xenopus tropicalis (Western clawed frog).